The following is a 499-amino-acid chain: Glycerol kinase (499 aa).

Thr-13 provides a ligand contact to ADP. Thr-13, Thr-14, and Ser-15 together coordinate ATP. Thr-13 is a sn-glycerol 3-phosphate binding site. Arg-17 serves as a coordination point for ADP. Arg-83, Glu-84, Tyr-135, and Asp-245 together coordinate sn-glycerol 3-phosphate. Positions 83, 84, 135, 245, and 246 each coordinate glycerol. ADP-binding residues include Thr-267 and Gly-310. 4 residues coordinate ATP: Thr-267, Gly-310, Gln-314, and Gly-411. Gly-411 and Asn-415 together coordinate ADP.

Belongs to the FGGY kinase family.

It catalyses the reaction glycerol + ATP = sn-glycerol 3-phosphate + ADP + H(+). The protein operates within polyol metabolism; glycerol degradation via glycerol kinase pathway; sn-glycerol 3-phosphate from glycerol: step 1/1. Inhibited by fructose 1,6-bisphosphate (FBP). Functionally, key enzyme in the regulation of glycerol uptake and metabolism. Catalyzes the phosphorylation of glycerol to yield sn-glycerol 3-phosphate. The chain is Glycerol kinase from Stenotrophomonas maltophilia (strain R551-3).